A 51-amino-acid chain; its full sequence is Insulin (51 aa).

3 cysteine pairs are disulfide-bonded: Cys-7/Cys-37, Cys-19/Cys-50, and Cys-36/Cys-41.

It belongs to the insulin family. In terms of assembly, heterodimer of a B chain and an A chain linked by two disulfide bonds.

Its subcellular location is the secreted. Its function is as follows. Insulin decreases blood glucose concentration. It increases cell permeability to monosaccharides, amino acids and fatty acids. It accelerates glycolysis, the pentose phosphate cycle, and glycogen synthesis in liver. This Ptyas dhumnades (Big-eyed ratsnake) protein is Insulin (INS).